The sequence spans 452 residues: Translation initiation factor eIF2B subunit gamma (452 aa).

Met-1 is modified (N-acetylmethionine). Position 260 is a phosphoserine (Ser-260).

Belongs to the eIF-2B gamma/epsilon subunits family. Component of the translation initiation factor 2B (eIF2B) complex which is a heterodecamer of two sets of five different subunits: alpha, beta, gamma, delta and epsilon. Subunits alpha, beta and delta comprise a regulatory subcomplex and subunits epsilon and gamma comprise a catalytic subcomplex. Within the complex, the hexameric regulatory complex resides at the center, with the two heterodimeric catalytic subcomplexes bound on opposite sides.

It is found in the cytoplasm. The protein localises to the cytosol. With respect to regulation, activated by the chemical integrated stress response (ISR) inhibitor ISRIB which stimulates guanine nucleotide exchange factor activity for both phosphorylated and unphosphorylated eIF2. Functionally, acts as a component of the translation initiation factor 2B (eIF2B) complex, which catalyzes the exchange of GDP for GTP on the eukaryotic initiation factor 2 (eIF2) complex gamma subunit. Its guanine nucleotide exchange factor activity is repressed when bound to eIF2 complex phosphorylated on the alpha subunit, thereby limiting the amount of methionyl-initiator methionine tRNA available to the ribosome and consequently global translation is repressed. The chain is Translation initiation factor eIF2B subunit gamma (EIF2B3) from Homo sapiens (Human).